We begin with the raw amino-acid sequence, 129 residues long: M-zodatoxin-Lt8f (129 aa).

The first 20 residues, 1-20 (MKYFVVALALVAAFACIAES), serve as a signal peptide directing secretion. Positions 21 to 60 (KPAESEHELAEVEEENELADLEDAVWLEHLADLSDLEEAR) are excised as a propeptide. The Processing quadruplet motif signature appears at 57–60 (EEAR).

Cleavage of the propeptide depends on the processing quadruplet motif (XXXR, with at least one of X being E). As to expression, expressed by the venom gland.

The protein resides in the secreted. In terms of biological role, insecticidal, cytolytic and antimicrobial peptide. Has insecticidal activity against the flesh fly S.carnaria. Has antibacterial activity against the Gram-negative bacteria E.coli. Forms voltage-dependent, ion-permeable channels in membranes. At high concentration causes cell membrane lysis. The sequence is that of M-zodatoxin-Lt8f (cit 1-7) from Lachesana tarabaevi (Spider).